A 218-amino-acid polypeptide reads, in one-letter code: UPF0598 protein C8orf82 homolog (218 aa).

This sequence belongs to the UPF0598 family.

In Rattus norvegicus (Rat), this protein is UPF0598 protein C8orf82 homolog.